A 154-amino-acid chain; its full sequence is Endoribonuclease YbeY (154 aa).

Zn(2+)-binding residues include histidine 117, histidine 121, and histidine 127.

Belongs to the endoribonuclease YbeY family. The cofactor is Zn(2+).

The protein localises to the cytoplasm. Functionally, single strand-specific metallo-endoribonuclease involved in late-stage 70S ribosome quality control and in maturation of the 3' terminus of the 16S rRNA. This chain is Endoribonuclease YbeY, found in Aromatoleum aromaticum (strain DSM 19018 / LMG 30748 / EbN1) (Azoarcus sp. (strain EbN1)).